A 320-amino-acid polypeptide reads, in one-letter code: GTP 3',8-cyclase (320 aa).

The Radical SAM core domain maps to 5-225 (QFGRKINYLR…IQLIKKDEKA (221 aa)). Position 14 (Arg-14) interacts with GTP. Cys-21 and Cys-25 together coordinate [4Fe-4S] cluster. Tyr-27 is an S-adenosyl-L-methionine binding site. Cys-28 serves as a coordination point for [4Fe-4S] cluster. Arg-64 lines the GTP pocket. Gly-68 contributes to the S-adenosyl-L-methionine binding site. Position 95 (Thr-95) interacts with GTP. Ser-119 is a binding site for S-adenosyl-L-methionine. Residue Lys-155 coordinates GTP. Met-189 is an S-adenosyl-L-methionine binding site. [4Fe-4S] cluster contacts are provided by Cys-248 and Cys-251. A GTP-binding site is contributed by 253-255 (RIR). [4Fe-4S] cluster is bound at residue Cys-265.

It belongs to the radical SAM superfamily. MoaA family. In terms of assembly, monomer and homodimer. The cofactor is [4Fe-4S] cluster.

It catalyses the reaction GTP + AH2 + S-adenosyl-L-methionine = (8S)-3',8-cyclo-7,8-dihydroguanosine 5'-triphosphate + 5'-deoxyadenosine + L-methionine + A + H(+). Its pathway is cofactor biosynthesis; molybdopterin biosynthesis. In terms of biological role, catalyzes the cyclization of GTP to (8S)-3',8-cyclo-7,8-dihydroguanosine 5'-triphosphate. The sequence is that of GTP 3',8-cyclase from Campylobacter jejuni subsp. jejuni serotype O:6 (strain 81116 / NCTC 11828).